A 77-amino-acid polypeptide reads, in one-letter code: Sec-independent protein translocase protein TatA (77 aa).

The chain crosses the membrane as a helical span at residues 1–21 (MGSFSIWHWLVVGILVLLLFG). The interval 41–77 (KGMSEDDAPTPAPKQIDAQRAPDLSATPTPTAETENR) is disordered. The span at 66-77 (ATPTPTAETENR) shows a compositional bias: polar residues.

Belongs to the TatA/E family. The Tat system comprises two distinct complexes: a TatABC complex, containing multiple copies of TatA, TatB and TatC subunits, and a separate TatA complex, containing only TatA subunits. Substrates initially bind to the TatABC complex, which probably triggers association of the separate TatA complex to form the active translocon.

The protein resides in the cell inner membrane. In terms of biological role, part of the twin-arginine translocation (Tat) system that transports large folded proteins containing a characteristic twin-arginine motif in their signal peptide across membranes. TatA could form the protein-conducting channel of the Tat system. The polypeptide is Sec-independent protein translocase protein TatA (Sphingopyxis alaskensis (strain DSM 13593 / LMG 18877 / RB2256) (Sphingomonas alaskensis)).